A 397-amino-acid polypeptide reads, in one-letter code: Phosphoglycerate kinase (397 aa).

Residues 21-23 (DVN), Arg36, 59-62 (HFGR), Arg119, and Arg152 each bind substrate. Residues Lys202, Glu324, and 354 to 357 (GGDT) contribute to the ATP site.

Belongs to the phosphoglycerate kinase family. Monomer.

It localises to the cytoplasm. The catalysed reaction is (2R)-3-phosphoglycerate + ATP = (2R)-3-phospho-glyceroyl phosphate + ADP. It participates in carbohydrate degradation; glycolysis; pyruvate from D-glyceraldehyde 3-phosphate: step 2/5. This chain is Phosphoglycerate kinase, found in Cereibacter sphaeroides (strain ATCC 17025 / ATH 2.4.3) (Rhodobacter sphaeroides).